The chain runs to 122 residues: Large ribosomal subunit protein uL14 (122 aa).

This sequence belongs to the universal ribosomal protein uL14 family. As to quaternary structure, part of the 50S ribosomal subunit. Forms a cluster with proteins L3 and L19. In the 70S ribosome, L14 and L19 interact and together make contacts with the 16S rRNA in bridges B5 and B8.

In terms of biological role, binds to 23S rRNA. Forms part of two intersubunit bridges in the 70S ribosome. This Neisseria gonorrhoeae (strain ATCC 700825 / FA 1090) protein is Large ribosomal subunit protein uL14.